The chain runs to 352 residues: MTLEQKLDRIVLRAEELRAMLAAGVDGERFVAASRELAEIEPVEQQILLLRAAERARDEAEAARADPELRELADAELDSLRETLPRLEHEIRLALLPRDAADERPAILEIRPAAGGDEAALFAAELFAAYRRYADLRGWRFEILDYTETELGGLREGIAEITGRAVFARLKFESGVHRVQRVPATETQGRIHTSTVTVAVLPEAEDVDVEVNEADLRIDVFRASGAGGQHVNKTESAVRITHLPTGIVVAMQEERSQHKNRAKAMKILRARLYEQTRAAAAAGRAADRKSQVGTGDRSERIRTYNFPQGRVTDHRINLTLHKIDRVMLGEFDEIIDALTEEDQAARLAAAGA.

Residue glutamine 229 is modified to N5-methylglutamine.

Belongs to the prokaryotic/mitochondrial release factor family. In terms of processing, methylated by PrmC. Methylation increases the termination efficiency of RF1.

Its subcellular location is the cytoplasm. Peptide chain release factor 1 directs the termination of translation in response to the peptide chain termination codons UAG and UAA. The sequence is that of Peptide chain release factor 1 from Acidiphilium cryptum (strain JF-5).